Here is a 318-residue protein sequence, read N- to C-terminus: NADH-ubiquinone oxidoreductase chain 1 (318 aa).

A run of 8 helical transmembrane segments spans residues 3-23 (TMNL…LTLV), 69-89 (ILYI…WTPL), 98-118 (FNLG…SILW), 135-155 (AVAQ…SILL), 171-191 (HLWL…STLA), 217-237 (AGPF…MNAL), 253-273 (ELFT…FLWI), and 294-314 (LPLT…ISSI).

This sequence belongs to the complex I subunit 1 family. In terms of assembly, core subunit of respiratory chain NADH dehydrogenase (Complex I) which is composed of 45 different subunits.

The protein localises to the mitochondrion inner membrane. It catalyses the reaction a ubiquinone + NADH + 5 H(+)(in) = a ubiquinol + NAD(+) + 4 H(+)(out). In terms of biological role, core subunit of the mitochondrial membrane respiratory chain NADH dehydrogenase (Complex I) which catalyzes electron transfer from NADH through the respiratory chain, using ubiquinone as an electron acceptor. Essential for the catalytic activity and assembly of complex I. The sequence is that of NADH-ubiquinone oxidoreductase chain 1 (MT-ND1) from Papio hamadryas (Hamadryas baboon).